Here is a 332-residue protein sequence, read N- to C-terminus: HTH-type transcriptional regulator IdnR (332 aa).

Residues 6-60 enclose the HTH lacI-type domain; that stretch reads ISLQDIATLAGVTKMTVSRYIRSPKKVAKETGERIAKIMEEINYIPNRAPGMLLN. Residues 8-27 constitute a DNA-binding region (H-T-H motif); that stretch reads LQDIATLAGVTKMTVSRYIR.

Functionally, idn operon regulator. May repress gntKU and gntT genes when growing on L-idonate. This is HTH-type transcriptional regulator IdnR (idnR) from Escherichia coli (strain K12).